We begin with the raw amino-acid sequence, 486 residues long: Homoserine O-acetyltransferase (486 aa).

The AB hydrolase-1 domain maps to 66-436 (NVLVICHALT…PEGHDAFLLE (371 aa)). Residue S162 is the Nucleophile of the active site. The disordered stretch occupies residues 248–281 (KFSRRSPSIAQQQKAQREETRKPSTVSEHSLQIH). 2 stretches are compositionally biased toward polar residues: residues 250–261 (SRRSPSIAQQQK) and 270–280 (PSTVSEHSLQI). Catalysis depends on residues D401 and H430.

It belongs to the AB hydrolase superfamily. MetX family.

It is found in the cytoplasm. The enzyme catalyses L-homoserine + acetyl-CoA = O-acetyl-L-homoserine + CoA. It functions in the pathway amino-acid biosynthesis; L-methionine biosynthesis via de novo pathway; O-acetyl-L-homoserine from L-homoserine: step 1/1. In terms of biological role, commits homoserine to the methionine biosynthesis pathway by catalyzing its O-acetylation. This Saccharomyces cerevisiae (strain ATCC 204508 / S288c) (Baker's yeast) protein is Homoserine O-acetyltransferase (MET2).